The chain runs to 283 residues: Homeobox protein Hox-C12b (283 aa).

A DNA-binding region (homeobox) is located at residues 215 to 274 (TRKKRKPYSKLQLNELEGEFILNEFITRQRRRELSDRLNLTDQQVKIWFQNRRMKKKRLL).

It belongs to the Abd-B homeobox family.

It localises to the nucleus. Sequence-specific transcription factor which is part of a developmental regulatory system that provides cells with specific positional identities on the anterior-posterior axis. In Danio rerio (Zebrafish), this protein is Homeobox protein Hox-C12b (hoxc12b).